A 205-amino-acid polypeptide reads, in one-letter code: MRYTSHAVETLIDEFAKLPGIGRKTAQRLTMFILHEEKEKVESLAQALLDLKNKVSYCSLCQNVTDKEIDPCNICTSVKRDKRVVCVVEAPNDVLAFEKTNQYNGLYHVLHGVISPLDGVGPDDLKVKELIHRLSETDPETSIKEVILAINPTVEGETTVLYLSKLLKPLGVKVTRIARGIPIGTELEYIDDATLTRALEGRSEL.

The C4-type zinc-finger motif lies at 58-75 (CSLCQNVTDKEIDPCNIC). Residues 83–182 (RVVCVVEAPN…KVTRIARGIP (100 aa)) form the Toprim domain.

Belongs to the RecR family.

Its function is as follows. May play a role in DNA repair. It seems to be involved in an RecBC-independent recombinational process of DNA repair. It may act with RecF and RecO. This chain is Recombination protein RecR, found in Chloroherpeton thalassium (strain ATCC 35110 / GB-78).